The chain runs to 343 residues: Ferredoxin--NADP reductase (343 aa).

FAD contacts are provided by aspartate 36, glutamine 44, tyrosine 49, valine 89, phenylalanine 124, aspartate 289, and threonine 330.

The protein belongs to the ferredoxin--NADP reductase type 2 family. Homodimer. The cofactor is FAD.

It catalyses the reaction 2 reduced [2Fe-2S]-[ferredoxin] + NADP(+) + H(+) = 2 oxidized [2Fe-2S]-[ferredoxin] + NADPH. This is Ferredoxin--NADP reductase from Mesorhizobium japonicum (strain LMG 29417 / CECT 9101 / MAFF 303099) (Mesorhizobium loti (strain MAFF 303099)).